The primary structure comprises 417 residues: Pelargonidin 3-O-(6-caffeoylglucoside) 5-O-(6-O-malonylglucoside) 4'''-malonyltransferase (417 aa).

Catalysis depends on proton acceptor residues H147 and D360.

Belongs to the plant acyltransferase family. As to quaternary structure, monomer. As to expression, expressed at higher level in recently opened, fully pigmented flowers.

It carries out the reaction 4'''-demalonylsalvianin + malonyl-CoA = salvianin + CoA. Its pathway is pigment biosynthesis; anthocyanin biosynthesis. Its activity is regulated as follows. Inhibited by the following metal ions: Cd(2+), Cu(2+), Fe(2+), Hg(2+) and Zn(2+). Activity is strongly inhibited by CoA-SH and partially inhibited by acetyl-CoA, caffeic acid and bisdemalonylsalvianin. Its function is as follows. Catalyzes the transfer of the malonyl group from malonyl-CoA to the 4'''-hydroxyl group of the 5-glucosyl moiety of anthocyanins. Anthocyanins are ubiquitous colored pigments that are responsible for petal color. This is Pelargonidin 3-O-(6-caffeoylglucoside) 5-O-(6-O-malonylglucoside) 4'''-malonyltransferase from Salvia splendens (Scarlet sage).